A 151-amino-acid chain; its full sequence is Chemokine-like factor (151 aa).

The MARVEL domain occupies 13-133; it reads FCLSLKCFVK…DCALMCQKLR (121 aa). 4 helical membrane-spanning segments follow: residues 19–39, 45–65, 74–94, and 107–127; these read CFVK…FIVA, YIVI…LYMC, FFWP…MLIV, and IMVG…DCAL. Asn-142 carries an N-linked (GlcNAc...) asparagine glycan.

It belongs to the chemokine-like factor family. Both isoforms have highest expression levels in testis with relatively lower expression level in liver, spleen, lung, brain and heart and barely detectable levels in skeletal muscle and kidney were barely detected. In most tissues, isoform CKLF2 has higher expression levels than isoform CKLF1.

Its subcellular location is the secreted. It localises to the membrane. Its function is as follows. May play an important role in inflammation and regeneration of skeletal muscle. Essential for embryonic development. Has chemotactic response in monocytes, neutrophils and lymphocytes. Binds CCR4. The chain is Chemokine-like factor (Cklf) from Rattus norvegicus (Rat).